Consider the following 420-residue polypeptide: D-tagatose-1,6-bisphosphate aldolase subunit GatZ (420 aa).

This sequence belongs to the GatZ/KbaZ family. GatZ subfamily. As to quaternary structure, forms a complex with GatY.

It participates in carbohydrate metabolism; D-tagatose 6-phosphate degradation; D-glyceraldehyde 3-phosphate and glycerone phosphate from D-tagatose 6-phosphate: step 2/2. Its function is as follows. Component of the tagatose-1,6-bisphosphate aldolase GatYZ that is required for full activity and stability of the Y subunit. Could have a chaperone-like function for the proper and stable folding of GatY. When expressed alone, GatZ does not show any aldolase activity. Is involved in the catabolism of galactitol. The sequence is that of D-tagatose-1,6-bisphosphate aldolase subunit GatZ from Escherichia coli O45:K1 (strain S88 / ExPEC).